The primary structure comprises 446 residues: BAG family molecular chaperone regulator 7 (446 aa).

The interval 230 to 252 (TGGEKKKKHEEKEKKEKIETKSK) is disordered. The segment covering 239 to 250 (EEKEKKEKIETK) has biased composition (basic and acidic residues). In terms of domain architecture, IQ spans 303–332 (PEYAAVMIQRAFKAYLIRRSKSLRALRDLA). The BAG domain occupies 330 to 407 (DLAIAKTKLK…AMLDVVDPQP (78 aa)). Phosphothreonine is present on T443.

In terms of assembly, binds to the ATPase domain of HSP70/HSC70 chaperones. Interacts with HSP70-11/BIP2.

It localises to the endoplasmic reticulum. Its function is as follows. Co-chaperone that regulates diverse cellular pathways, such as programmed cell death and stress responses. Necessary for the proper maintenance of the unfolded protein response (UPR) during heat and cold tolerance. This is BAG family molecular chaperone regulator 7 (BAG7) from Arabidopsis thaliana (Mouse-ear cress).